A 121-amino-acid polypeptide reads, in one-letter code: Large-conductance mechanosensitive channel (121 aa).

2 helical membrane passes run 14–34 and 67–87; these read VLDLAVGVIIGAAFTALVKSL and GAFLNDVINFVITAFVIFVLI.

This sequence belongs to the MscL family. In terms of assembly, homopentamer.

The protein resides in the cell membrane. Channel that opens in response to stretch forces in the membrane lipid bilayer. May participate in the regulation of osmotic pressure changes within the cell. This Lactococcus lactis subsp. cremoris (strain SK11) protein is Large-conductance mechanosensitive channel.